A 239-amino-acid polypeptide reads, in one-letter code: Probable transcriptional regulatory protein Ajs_1898 (239 aa).

The segment at 1–21 (MAGHSKWANIQHRKGRQDEKR) is disordered.

The protein belongs to the TACO1 family.

Its subcellular location is the cytoplasm. This chain is Probable transcriptional regulatory protein Ajs_1898, found in Acidovorax sp. (strain JS42).